We begin with the raw amino-acid sequence, 330 residues long: Ribosome production factor 1 (330 aa).

Disordered stretches follow at residues 1-32 (MKAVKAPVEEMDQAECEVKEEKSASGPCFPPT) and 53-83 (EEKRKKRMELKKKKKKERKALDDKAPPKEVP). Positions 55–70 (KRKKRMELKKKKKKER) are enriched in basic residues. Residues 71-83 (KALDDKAPPKEVP) show a composition bias toward basic and acidic residues. The region spanning 123-306 (PKVLITTSDR…LRSLQKGTFD (184 aa)) is the Brix domain. The RNA-binding stretch occupies residues 284–301 (VGIQELGPRFTLKLRSLQ).

It is found in the nucleus. The protein resides in the nucleolus. Its function is as follows. May be required for ribosome biogenesis. This chain is Ribosome production factor 1 (rpf1), found in Danio rerio (Zebrafish).